Consider the following 180-residue polypeptide: Large ribosomal subunit protein uL5 (180 aa).

Belongs to the universal ribosomal protein uL5 family. As to quaternary structure, part of the 50S ribosomal subunit; part of the 5S rRNA/L5/L18/L25 subcomplex. Contacts the 5S rRNA and the P site tRNA. Forms a bridge to the 30S subunit in the 70S ribosome.

This is one of the proteins that bind and probably mediate the attachment of the 5S RNA into the large ribosomal subunit, where it forms part of the central protuberance. In the 70S ribosome it contacts protein S13 of the 30S subunit (bridge B1b), connecting the 2 subunits; this bridge is implicated in subunit movement. Contacts the P site tRNA; the 5S rRNA and some of its associated proteins might help stabilize positioning of ribosome-bound tRNAs. The sequence is that of Large ribosomal subunit protein uL5 from Streptococcus thermophilus (strain ATCC BAA-491 / LMD-9).